Here is a 234-residue protein sequence, read N- to C-terminus: Octanoyltransferase (234 aa).

The BPL/LPL catalytic domain maps to 50 to 234 (GEAPELVWLL…AFEQVFGPTR (185 aa)). Residues 88–95 (RGGQITYH), 163–165 (AIG), and 176–178 (GIA) contribute to the substrate site. Cys-194 (acyl-thioester intermediate) is an active-site residue.

Belongs to the LipB family.

The protein localises to the cytoplasm. The catalysed reaction is octanoyl-[ACP] + L-lysyl-[protein] = N(6)-octanoyl-L-lysyl-[protein] + holo-[ACP] + H(+). It participates in protein modification; protein lipoylation via endogenous pathway; protein N(6)-(lipoyl)lysine from octanoyl-[acyl-carrier-protein]: step 1/2. Its function is as follows. Catalyzes the transfer of endogenously produced octanoic acid from octanoyl-acyl-carrier-protein onto the lipoyl domains of lipoate-dependent enzymes. Lipoyl-ACP can also act as a substrate although octanoyl-ACP is likely to be the physiological substrate. The protein is Octanoyltransferase of Rhodopseudomonas palustris (strain BisA53).